The chain runs to 61 residues: Putative neurotoxin-A (61 aa).

The first 19 residues, 1 to 19, serve as a signal peptide directing secretion; that stretch reads MKTVCGVFMVLLALTVLLA. 3 disulfide bridges follow: cysteine 31–cysteine 50, cysteine 36–cysteine 55, and cysteine 40–cysteine 57.

It belongs to the short scorpion toxin superfamily. As to expression, expressed by the venom gland.

It is found in the secreted. The sequence is that of Putative neurotoxin-A from Lychas mucronatus (Chinese swimming scorpion).